The sequence spans 147 residues: MEQTYVMVKPDGVERGLIGEIVTRIEKKGLKIVAGKLMQIDRELAEKHYAEHIGKSFFEDLIGFITSGPVFAMVLEGDDAIATARRMMGKTNPLEADPGTIRADYAIHTNRNVIHGSDSPESAKREIQLFFAPQEILSYQKAIDTWI.

ATP-binding residues include Lys9, Phe57, Arg85, Thr91, Arg102, and Asn112. His115 (pros-phosphohistidine intermediate) is an active-site residue.

The protein belongs to the NDK family. In terms of assembly, homotetramer. It depends on Mg(2+) as a cofactor.

It is found in the cytoplasm. It carries out the reaction a 2'-deoxyribonucleoside 5'-diphosphate + ATP = a 2'-deoxyribonucleoside 5'-triphosphate + ADP. The enzyme catalyses a ribonucleoside 5'-diphosphate + ATP = a ribonucleoside 5'-triphosphate + ADP. Functionally, major role in the synthesis of nucleoside triphosphates other than ATP. The ATP gamma phosphate is transferred to the NDP beta phosphate via a ping-pong mechanism, using a phosphorylated active-site intermediate. The chain is Nucleoside diphosphate kinase from Listeria monocytogenes serotype 4b (strain F2365).